The sequence spans 31 residues: Cyclotide mra3 (31 aa).

Intrachain disulfides connect cysteine 5-cysteine 21, cysteine 9-cysteine 23, and cysteine 14-cysteine 28.

Post-translationally, this is a cyclic peptide. Contains 3 disulfide bonds.

Its function is as follows. Probably participates in a plant defense mechanism. This chain is Cyclotide mra3, found in Melicytus ramiflorus (Whitey wood).